Consider the following 390-residue polypeptide: MAVDLRPETWTVSSNEALNLSLVDENGAVNFKPTFTYPIYGDSEQIFGYKNLQIFLAFDSITFKPFVNVKYDAKLNNEIEDVQKLLLDKLPEDDVIIKDEEAWIKTFTKEQETFALPEKDKLVEEYEIGDQEFVIYRVSLQDPAIKMLHKRMQIFTLLFIESASYIDENDSSWEIFIVFNKNSKKCIGYTTTYQFWKYLGAQSFDSSKADEQKCRAKISQFLIMPPYQGHGHGKRLYQAIVKQWMNDLSVVEITVEDPNESFDDLRDRCDFERVINKNSLADCPNELPINIDWITKKQAQLKLEKRQFMRILEMFLLYQKSPNYRLQLKKRIYEKNFEALMDMDESLKKDKLQTAFQSLTEDYNRILSKVAIRKRTFSDSQGESDKRLKA.

Interaction with histone H4 N-terminus regions lie at residues aspartate 42 to glutamate 44 and tyrosine 193 to phenylalanine 195. In terms of domain architecture, N-acetyltransferase spans valine 138 to asparagine 290. Residues phenylalanine 221 to isoleucine 223 and glutamine 228 to lysine 234 contribute to the acetyl-CoA site. Catalysis depends on glutamate 256, which acts as the Proton donor/acceptor.

This sequence belongs to the HAT1 family. Component of the HAT-B complex composed of at least HAT1 and HAT2. The HAT-B complex binds to histone H4 tail.

It localises to the cytoplasm. Its subcellular location is the nucleus. The enzyme catalyses L-lysyl-[protein] + acetyl-CoA = N(6)-acetyl-L-lysyl-[protein] + CoA + H(+). Catalytic component of the histone acetylase B (HAT-B) complex. Acetylates 'Lys-12' of histone H4 which is required for telomeric silencing. Has intrinsic substrate specificity that modifies lysine in recognition sequence GXGKXG. Involved in DNA double-strand break repair. This chain is Histone acetyltransferase type B catalytic subunit (HAT1), found in Kluyveromyces lactis (strain ATCC 8585 / CBS 2359 / DSM 70799 / NBRC 1267 / NRRL Y-1140 / WM37) (Yeast).